A 477-amino-acid polypeptide reads, in one-letter code: Dihydrolipoyl dehydrogenase (477 aa).

FAD contacts are provided by residues 34 to 49 (EKYKGKEGKTALGGTC), lysine 58, and glycine 122. Residues cysteine 49 and cysteine 54 are joined by a disulfide bond. NAD(+) contacts are provided by residues 188–192 (GAGVI), glutamate 211, valine 245, and 276–279 (AVGR). 2 residues coordinate FAD: aspartate 319 and alanine 327. Histidine 451 serves as the catalytic Proton acceptor.

The protein belongs to the class-I pyridine nucleotide-disulfide oxidoreductase family. Homodimer. It depends on FAD as a cofactor.

The protein resides in the cytoplasm. It catalyses the reaction N(6)-[(R)-dihydrolipoyl]-L-lysyl-[protein] + NAD(+) = N(6)-[(R)-lipoyl]-L-lysyl-[protein] + NADH + H(+). Functionally, the pyruvate dehydrogenase complex catalyzes the overall conversion of pyruvate to acetyl-CoA and CO(2). It contains multiple copies of three enzymatic components: pyruvate dehydrogenase (E1), dihydrolipoamide acetyltransferase (E2) and lipoamide dehydrogenase (E3). The chain is Dihydrolipoyl dehydrogenase from Azotobacter vinelandii.